A 375-amino-acid polypeptide reads, in one-letter code: Histidine biosynthesis bifunctional protein HisB (375 aa).

Residues 1–168 (MTPIVFIDRD…GIAHTLADAP (168 aa)) are histidinol-phosphatase. The active-site Nucleophile is D8. Mg(2+) is bound by residues D8, D10, and D128. The active-site Proton donor is the D10. An imidazoleglycerol-phosphate dehydratase region spans residues 169-375 (RRAVVQRHTK…HVLPSTKGAL (207 aa)).

In the N-terminal section; belongs to the histidinol-phosphatase family. The protein in the C-terminal section; belongs to the imidazoleglycerol-phosphate dehydratase family. It depends on Mg(2+) as a cofactor.

The protein resides in the cytoplasm. It catalyses the reaction D-erythro-1-(imidazol-4-yl)glycerol 3-phosphate = 3-(imidazol-4-yl)-2-oxopropyl phosphate + H2O. The catalysed reaction is L-histidinol phosphate + H2O = L-histidinol + phosphate. The protein operates within amino-acid biosynthesis; L-histidine biosynthesis; L-histidine from 5-phospho-alpha-D-ribose 1-diphosphate: step 6/9. It participates in amino-acid biosynthesis; L-histidine biosynthesis; L-histidine from 5-phospho-alpha-D-ribose 1-diphosphate: step 8/9. The chain is Histidine biosynthesis bifunctional protein HisB from Xylella fastidiosa (strain 9a5c).